The following is a 306-amino-acid chain: Ribosomal protein L11 methyltransferase (306 aa).

4 residues coordinate S-adenosyl-L-methionine: threonine 154, glycine 179, aspartate 201, and asparagine 242.

It belongs to the methyltransferase superfamily. PrmA family.

Its subcellular location is the cytoplasm. The enzyme catalyses L-lysyl-[protein] + 3 S-adenosyl-L-methionine = N(6),N(6),N(6)-trimethyl-L-lysyl-[protein] + 3 S-adenosyl-L-homocysteine + 3 H(+). Its function is as follows. Methylates ribosomal protein L11. This Xylella fastidiosa (strain Temecula1 / ATCC 700964) protein is Ribosomal protein L11 methyltransferase.